We begin with the raw amino-acid sequence, 131 residues long: Flagellar assembly factor FliW (131 aa).

The protein belongs to the FliW family. In terms of assembly, interacts with translational regulator CsrA and flagellin(s).

Its subcellular location is the cytoplasm. Functionally, acts as an anti-CsrA protein, binds CsrA and prevents it from repressing translation of its target genes, one of which is flagellin. Binds to flagellin and participates in the assembly of the flagellum. In Campylobacter lari (strain RM2100 / D67 / ATCC BAA-1060), this protein is Flagellar assembly factor FliW.